The chain runs to 188 residues: UPF0301 protein Mmwyl1_0539 (188 aa).

Belongs to the UPF0301 (AlgH) family.

The polypeptide is UPF0301 protein Mmwyl1_0539 (Marinomonas sp. (strain MWYL1)).